We begin with the raw amino-acid sequence, 692 residues long: A-type ATP synthase subunit I (692 aa).

The next 7 membrane-spanning stretches (helical) occupy residues 389 to 409, 422 to 442, 494 to 514, 531 to 551, 553 to 573, 602 to 622, and 624 to 644; these read GIML…LFIW, LGYI…ITGG, ILVF…FVGF, GVWI…FAGA, TMIA…ASMY, ARLL…NIMA, and LVGE…LLVG.

The protein belongs to the V-ATPase 116 kDa subunit family. In terms of assembly, the A-type ATPase is composed of subunits A(3), B(3), C, D, E(1 or 2), F, H(2), I and K(x).

The protein localises to the cell membrane. Its function is as follows. Component of the A-type ATP synthase that produces ATP from ADP in the presence of a proton gradient across the membrane. The chain is A-type ATP synthase subunit I from Methanocaldococcus jannaschii (strain ATCC 43067 / DSM 2661 / JAL-1 / JCM 10045 / NBRC 100440) (Methanococcus jannaschii).